We begin with the raw amino-acid sequence, 469 residues long: IME2-dependent-signaling protein (469 aa).

Methionine 1 is modified (N-acetylmethionine). The residue at position 13 (threonine 13) is a Phosphothreonine. 3 disordered regions span residues 22-55 (KSWS…PATM), 67-92 (ARGS…QQQQ), and 117-143 (DLTL…PPLT). Serine 23, serine 27, and serine 39 each carry phosphoserine. 2 stretches are compositionally biased toward polar residues: residues 25–42 (SESQ…SPIG) and 67–82 (ARGS…GSSQ). Phosphoserine occurs at positions 122, 130, 136, 147, and 148.

Functionally, seems to act indirectly to modify IME2 activity, thus permitting IME2 to carry out later meiotic functions. The protein is IME2-dependent-signaling protein (IDS2) of Saccharomyces cerevisiae (strain ATCC 204508 / S288c) (Baker's yeast).